The primary structure comprises 178 residues: Small ribosomal subunit protein uS5 (178 aa).

Residues 15–78 (FEEKIIEIRR…SAAKRNIVEV (64 aa)) enclose the S5 DRBM domain.

Belongs to the universal ribosomal protein uS5 family. Part of the 30S ribosomal subunit. Contacts proteins S4 and S8.

With S4 and S12 plays an important role in translational accuracy. Its function is as follows. Located at the back of the 30S subunit body where it stabilizes the conformation of the head with respect to the body. The polypeptide is Small ribosomal subunit protein uS5 (Thermotoga maritima (strain ATCC 43589 / DSM 3109 / JCM 10099 / NBRC 100826 / MSB8)).